The following is a 66-amino-acid chain: Large ribosomal subunit protein bL35 (66 aa).

Residues 1–46 (MPKMKTHRASAKRFKRTANGGLKRHHAFTGHRFHGKTKKQRRHLRK) are compositionally biased toward basic residues. Residues 1–52 (MPKMKTHRASAKRFKRTANGGLKRHHAFTGHRFHGKTKKQRRHLRKPAMVSR) form a disordered region.

It belongs to the bacterial ribosomal protein bL35 family.

The polypeptide is Large ribosomal subunit protein bL35 (Lactobacillus acidophilus (strain ATCC 700396 / NCK56 / N2 / NCFM)).